Reading from the N-terminus, the 283-residue chain is Pantothenate synthetase (283 aa).

Residue 30–37 (MGNLHAGH) coordinates ATP. His37 (proton donor) is an active-site residue. Residue Gln61 participates in (R)-pantoate binding. Residue Gln61 participates in beta-alanine binding. 149–152 (GEKD) lines the ATP pocket. Residue Gln155 coordinates (R)-pantoate. Residues Val178 and 186–189 (LSSR) each bind ATP.

It belongs to the pantothenate synthetase family. In terms of assembly, homodimer.

Its subcellular location is the cytoplasm. It carries out the reaction (R)-pantoate + beta-alanine + ATP = (R)-pantothenate + AMP + diphosphate + H(+). It functions in the pathway cofactor biosynthesis; (R)-pantothenate biosynthesis; (R)-pantothenate from (R)-pantoate and beta-alanine: step 1/1. Functionally, catalyzes the condensation of pantoate with beta-alanine in an ATP-dependent reaction via a pantoyl-adenylate intermediate. The sequence is that of Pantothenate synthetase from Pseudomonas paraeruginosa (strain DSM 24068 / PA7) (Pseudomonas aeruginosa (strain PA7)).